The chain runs to 268 residues: Small ribosomal subunit protein uS2 (268 aa).

A disordered region spans residues 233-268; that stretch reads SVREEEFAEAAAEGEEKPARRAPAKKAAKKGDDAQA.

This sequence belongs to the universal ribosomal protein uS2 family.

This is Small ribosomal subunit protein uS2 from Stenotrophomonas maltophilia (strain K279a).